Here is a 509-residue protein sequence, read N- to C-terminus: Autophagy-related protein 16 (509 aa).

WD repeat units lie at residues 223-262 (AHEG…LIKS), 265-304 (GSLG…VRHT), 307-347 (GHTD…CTNT), 349-388 (LFTS…LLSE), 391-430 (GHSS…ICGT), 437-478 (RLAS…SILK), and 480-509 (QTSP…CTWT).

This sequence belongs to the WD repeat ATG16 family.

In terms of biological role, may play a role in autophagy. In Arabidopsis thaliana (Mouse-ear cress), this protein is Autophagy-related protein 16.